The following is a 490-amino-acid chain: Nicotinate phosphoribosyltransferase (490 aa).

Phosphohistidine is present on His-206.

The protein belongs to the NAPRTase family. Transiently phosphorylated on a His residue during the reaction cycle. Phosphorylation strongly increases the affinity for substrates and increases the rate of nicotinate D-ribonucleotide production. Dephosphorylation regenerates the low-affinity form of the enzyme, leading to product release.

It carries out the reaction nicotinate + 5-phospho-alpha-D-ribose 1-diphosphate + ATP + H2O = nicotinate beta-D-ribonucleotide + ADP + phosphate + diphosphate. Its pathway is cofactor biosynthesis; NAD(+) biosynthesis; nicotinate D-ribonucleotide from nicotinate: step 1/1. Its function is as follows. Catalyzes the synthesis of beta-nicotinate D-ribonucleotide from nicotinate and 5-phospho-D-ribose 1-phosphate at the expense of ATP. The protein is Nicotinate phosphoribosyltransferase (pncB) of Bacillus subtilis (strain 168).